The chain runs to 360 residues: Amine dehydrogenase (360 aa).

Belongs to the amine dehydrogenase family. As to quaternary structure, homodimer.

It catalyses the reaction a secondary alkyl amine + NAD(+) + H2O = a ketone + NH4(+) + NADH + H(+). The catalysed reaction is a secondary alkyl amine + NADP(+) + H2O = a ketone + NH4(+) + NADPH + H(+). The enzyme catalyses serinol + NAD(+) + H2O = dihydroxyacetone + NH4(+) + NADH + H(+). It carries out the reaction serinol + NADP(+) + H2O = dihydroxyacetone + NH4(+) + NADPH + H(+). It catalyses the reaction 2-aminopropan-1-ol + NAD(+) + H2O = hydroxyacetone + NH4(+) + NADH + H(+). The catalysed reaction is (R)-1-phenylethylamine + NAD(+) + H2O = acetophenone + NH4(+) + NADH + H(+). The enzyme catalyses (S)-1-phenylethylamine + NAD(+) + H2O = acetophenone + NH4(+) + NADH + H(+). It carries out the reaction (2S)-2-aminobutan-1-ol + NAD(+) + H2O = 1-hydroxy-2-butanone + NH4(+) + NADH + H(+). It catalyses the reaction (2S)-2-amino-3-methylbutan-1-ol + NAD(+) + H2O = 1-hydroxy-3-methylbutan-2-one + NH4(+) + NADH + H(+). The catalysed reaction is 2-aminopentan-1-ol + NAD(+) + H2O = 1-hydroxypentan-2-one + NH4(+) + NADH + H(+). The enzyme catalyses (S)-leucinol + NAD(+) + H2O = 1-hydroxy-4-methylpentan-2-one + NH4(+) + NADH + H(+). It carries out the reaction (S)-isoleucinol + NAD(+) + H2O = (3S)-1-hydroxy-3-methylpentan-2-one + NH4(+) + NADH + H(+). It catalyses the reaction (S)-methioninol + NAD(+) + H2O = 1-hydroxy-4-(methythio)butan-2-one + NH4(+) + NADH + H(+). The catalysed reaction is 2-aminocyclohexanol + NAD(+) + H2O = 2-hydroxycyclohexan-1-one + NH4(+) + NADH + H(+). The enzyme catalyses L-alanine + NAD(+) + H2O = pyruvate + NH4(+) + NADH + H(+). It carries out the reaction D-alanine + NAD(+) + H2O = pyruvate + NH4(+) + NADH + H(+). It catalyses the reaction L-aspartate + NAD(+) + H2O = oxaloacetate + NH4(+) + NADH + H(+). The catalysed reaction is D-aspartate + NAD(+) + H2O = oxaloacetate + NH4(+) + NADH + H(+). The enzyme catalyses L-glutamate + NAD(+) + H2O = 2-oxoglutarate + NH4(+) + NADH + H(+). It carries out the reaction D-glutamate + NAD(+) + H2O = 2-oxoglutarate + NH4(+) + NADH + H(+). It catalyses the reaction L-serine + NAD(+) + H2O = 3-hydroxypyruvate + NH4(+) + NADH + H(+). The catalysed reaction is D-serine + NAD(+) + H2O = 3-hydroxypyruvate + NH4(+) + NADH + H(+). The enzyme catalyses methylamine + NAD(+) + H2O = formaldehyde + NH4(+) + NADH + H(+). It carries out the reaction ethylamine + NAD(+) + H2O = acetaldehyde + NH4(+) + NADH + H(+). It catalyses the reaction propylamine + NAD(+) + H2O = propanal + NH4(+) + NADH + H(+). The catalysed reaction is butylamine + NAD(+) + H2O = butanal + NH4(+) + NADH + H(+). The enzyme catalyses hexylamine + NAD(+) + H2O = hexanal + NH4(+) + NADH + H(+). It carries out the reaction octylamine + NAD(+) + H2O = octanal + NH4(+) + NADH + H(+). It catalyses the reaction (R)-sec-butylamine + NAD(+) + H2O = butan-2-one + NH4(+) + NADH + H(+). The catalysed reaction is (S)-sec-butylamine + NAD(+) + H2O = butan-2-one + NH4(+) + NADH + H(+). The enzyme catalyses 2-aminopentane + NAD(+) + H2O = pentan-2-one + NH4(+) + NADH + H(+). It carries out the reaction 3-aminopentane + NAD(+) + H2O = pentan-3-one + NH4(+) + NADH + H(+). It catalyses the reaction (2R)-heptan-2-amine + NAD(+) + H2O = heptan-2-one + NH4(+) + NADH + H(+). The catalysed reaction is (2S)-heptan-2-amine + NAD(+) + H2O = heptan-2-one + NH4(+) + NADH + H(+). The enzyme catalyses benzylamine + NAD(+) + H2O = benzaldehyde + NH4(+) + NADH + H(+). It carries out the reaction 3-aminobutan-2-ol + NAD(+) + H2O = acetoin + NH4(+) + NADH + H(+). It catalyses the reaction 3-aminobutan-1-ol + NAD(+) + H2O = 4-hydroxybutan-2-one + NH4(+) + NADH + H(+). The catalysed reaction is 5-hydroxypentan-2-amine + NAD(+) + H2O = 5-hydroxypentan-2-one + NH4(+) + NADH + H(+). The enzyme catalyses 4-hydroxyhexan-3-amine + NAD(+) + H2O = 4-hydroxyhexan-3-one + NH4(+) + NADH + H(+). It carries out the reaction 5-hydroxyoctan-4-amine + NAD(+) + H2O = 5-hydroxyoctan-4-one + NH4(+) + NADH + H(+). It catalyses the reaction 2-hydroxy-1-phenylethan-1-amine + NAD(+) + H2O = 2-hydroxyacetophenone + NH4(+) + NADH + H(+). The catalysed reaction is hexan-2-amine + NAD(+) + H2O = hexan-2-one + NH4(+) + NADH + H(+). The enzyme catalyses 4-phenylbutan-2-amine + NAD(+) + H2O = 4-phenylbutan-2-one + NH4(+) + NADH + H(+). Its function is as follows. Catalyzes the reversible oxidative deaminations of a broad range of amines, amino alcohols and amino acids. Catalyzes the reversible dehydrogenation of serinol in the presence of NAD(+) to give dihydroxyacetone, ammonium ion and NADH, while NADP(+) shows a slight activity. Is also able to produce 2-amino-1-propanol and aspartate by the reductive amination of the corresponding keto alcohol (hydroxyacetone) and keto acid (oxaloacetate) in the presence of ammonium ions and NADH, and that of acetophenone from phenylethylamine by the oxidative deamination in the presence of NAD(+). The protein is Amine dehydrogenase of Streptomyces virginiae (Streptomyces cinnamonensis).